A 176-amino-acid polypeptide reads, in one-letter code: MMRALLLAIGLGLVAALQAQEFPAVGQPLQDLLGRWYLKAMTSDPEIPGKKPESVTPLILKALEGGDLEAQITFLIDGQCQDVTLVLKKTNQPFTFTAYDGKRVVYILPSKVKDHYILYCEGELDGQEVRMAKLVGRDPENNPEALEEFKEVARAKGLNPDIVRPQQSETCSPGGN.

Positions 1 to 19 (MMRALLLAIGLGLVAALQA) are cleaved as a signal peptide. An intrachain disulfide couples C80 to C171.

This sequence belongs to the calycin superfamily. Lipocalin family. Predominantly monomer. May form homodimer. Interacts with LMBR1L; this interaction mediates the endocytosis of LCN1.

Its subcellular location is the secreted. Functionally, could play a role in taste reception. Could be necessary for the concentration and delivery of sapid molecules in the gustatory system. Can bind various ligands, with chemical structures ranging from lipids and retinoids to the macrocyclic antibiotic rifampicin and even to microbial siderophores. Exhibits an extremely wide ligand pocket. This Sus scrofa (Pig) protein is Lipocalin-1 (LCN1).